We begin with the raw amino-acid sequence, 163 residues long: uncharacterized protein (163 aa).

Residues P128–V163 are disordered. Positions K129–V163 are enriched in basic residues.

This is an uncharacterized protein from Sulfurisphaera tokodaii (strain DSM 16993 / JCM 10545 / NBRC 100140 / 7) (Sulfolobus tokodaii).